We begin with the raw amino-acid sequence, 94 residues long: Co-chaperonin GroES (94 aa).

Belongs to the GroES chaperonin family. In terms of assembly, heptamer of 7 subunits arranged in a ring. Interacts with the chaperonin GroEL.

The protein resides in the cytoplasm. Functionally, together with the chaperonin GroEL, plays an essential role in assisting protein folding. The GroEL-GroES system forms a nano-cage that allows encapsulation of the non-native substrate proteins and provides a physical environment optimized to promote and accelerate protein folding. GroES binds to the apical surface of the GroEL ring, thereby capping the opening of the GroEL channel. This chain is Co-chaperonin GroES, found in Halothermothrix orenii (strain H 168 / OCM 544 / DSM 9562).